Reading from the N-terminus, the 368-residue chain is MPATPPNRLGLTASGLLALCRAGFEKEVAAELDDFAAGIGLTGFVRTRPGSAFVTFETHEPVAFADLAERCDWRTLIFARQLLPWFARVDDLPERDRATPIATATRNAGQRFAQLMLETPDTDEAKQQSGFCRRFTVPLQHELERIGAFREGAKGLPELHILFPDTSTAWLCAALPGQAALWPMGIPRLRMLREAASRSTLKLAEAIFTLLSETERNASLRAGLRAVDLGAAPGGWTWQLAHRGLRVTAVDNGPMAPSVMATEMVEHVRADGFTWRPQRPVEWMVCDMVEQPTRIAALVADWIATGRCRRTIFNLKLPMKKRLEAVEQCRALITKRLAQAGPFELRFKHLYHDREEITGYLALRAAAV.

Residues S199, 232 to 235, D251, D271, and D287 contribute to the S-adenosyl-L-methionine site; that span reads APGG. Residue K316 is the Proton acceptor of the active site.

It belongs to the class I-like SAM-binding methyltransferase superfamily. RNA methyltransferase RlmE family. RlmM subfamily. In terms of assembly, monomer.

It localises to the cytoplasm. It catalyses the reaction cytidine(2498) in 23S rRNA + S-adenosyl-L-methionine = 2'-O-methylcytidine(2498) in 23S rRNA + S-adenosyl-L-homocysteine + H(+). Catalyzes the 2'-O-methylation at nucleotide C2498 in 23S rRNA. The chain is Ribosomal RNA large subunit methyltransferase M from Aromatoleum aromaticum (strain DSM 19018 / LMG 30748 / EbN1) (Azoarcus sp. (strain EbN1)).